We begin with the raw amino-acid sequence, 81 residues long: Cytochrome b559 subunit alpha (81 aa).

Residues valine 21–tryptophan 35 traverse the membrane as a helical segment. Residue histidine 23 coordinates heme.

This sequence belongs to the PsbE/PsbF family. As to quaternary structure, heterodimer of an alpha subunit and a beta subunit. PSII is composed of 1 copy each of membrane proteins PsbA, PsbB, PsbC, PsbD, PsbE, PsbF, PsbH, PsbI, PsbJ, PsbK, PsbL, PsbM, PsbT, PsbX, PsbY, PsbZ, Psb30/Ycf12, peripheral proteins PsbO, CyanoQ (PsbQ), PsbU, PsbV and a large number of cofactors. It forms dimeric complexes. Heme b is required as a cofactor.

The protein resides in the cellular thylakoid membrane. This b-type cytochrome is tightly associated with the reaction center of photosystem II (PSII). PSII is a light-driven water:plastoquinone oxidoreductase that uses light energy to abstract electrons from H(2)O, generating O(2) and a proton gradient subsequently used for ATP formation. It consists of a core antenna complex that captures photons, and an electron transfer chain that converts photonic excitation into a charge separation. In Picosynechococcus sp. (strain ATCC 27264 / PCC 7002 / PR-6) (Agmenellum quadruplicatum), this protein is Cytochrome b559 subunit alpha.